Consider the following 370-residue polypeptide: Probable pectin lyase E (370 aa).

Cysteines 75 and 96 form a disulfide. Residue R245 is part of the active site. Residue N307 is glycosylated (N-linked (GlcNAc...) asparagine). An intrachain disulfide couples C311 to C319.

This sequence belongs to the polysaccharide lyase 1 family.

It is found in the secreted. The enzyme catalyses Eliminative cleavage of (1-&gt;4)-alpha-D-galacturonan methyl ester to give oligosaccharides with 4-deoxy-6-O-methyl-alpha-D-galact-4-enuronosyl groups at their non-reducing ends.. In terms of biological role, pectinolytic enzymes consist of four classes of enzymes: pectin lyase, polygalacturonase, pectin methylesterase and rhamnogalacturonase. Among pectinolytic enzymes, pectin lyase is the most important in depolymerization of pectin, since it cleaves internal glycosidic bonds of highly methylated pectins. In Aspergillus niger, this protein is Probable pectin lyase E (pelE).